Here is a 177-residue protein sequence, read N- to C-terminus: MSRVANNPVQLPSGVQVDLKGSDLSVKGSKGAMSLSVHSSVAVVQEDNVLTFAAKDGAKSSKAMAGTVRSLVNNMVTGVSVGFEKKLQLVGVGYRTKVTGNVLNLTLGFSHPVDYVLPEGVTAETPTQTEIVLKCSDKQLLGQVAAEIRAFRPPEPYKGKGVRYADENVRRKEAKKK.

It belongs to the universal ribosomal protein uL6 family. Part of the 50S ribosomal subunit.

Functionally, this protein binds to the 23S rRNA, and is important in its secondary structure. It is located near the subunit interface in the base of the L7/L12 stalk, and near the tRNA binding site of the peptidyltransferase center. The chain is Large ribosomal subunit protein uL6 from Saccharophagus degradans (strain 2-40 / ATCC 43961 / DSM 17024).